A 337-amino-acid chain; its full sequence is Undecaprenyl-phosphate 4-deoxy-4-formamido-L-arabinose transferase (337 aa).

Helical transmembrane passes span 235-255 (LSII…LLIV) and 270-290 (FVLF…MGLL).

The protein belongs to the glycosyltransferase 2 family.

It is found in the cell inner membrane. The catalysed reaction is UDP-4-deoxy-4-formamido-beta-L-arabinose + di-trans,octa-cis-undecaprenyl phosphate = 4-deoxy-4-formamido-alpha-L-arabinopyranosyl di-trans,octa-cis-undecaprenyl phosphate + UDP. It participates in glycolipid biosynthesis; 4-amino-4-deoxy-alpha-L-arabinose undecaprenyl phosphate biosynthesis; 4-amino-4-deoxy-alpha-L-arabinose undecaprenyl phosphate from UDP-4-deoxy-4-formamido-beta-L-arabinose and undecaprenyl phosphate: step 1/2. Its pathway is bacterial outer membrane biogenesis; lipopolysaccharide biosynthesis. Functionally, catalyzes the transfer of 4-deoxy-4-formamido-L-arabinose from UDP to undecaprenyl phosphate. The modified arabinose is attached to lipid A and is required for resistance to polymyxin and cationic antimicrobial peptides. In Pseudomonas syringae pv. syringae (strain B728a), this protein is Undecaprenyl-phosphate 4-deoxy-4-formamido-L-arabinose transferase.